A 122-amino-acid polypeptide reads, in one-letter code: Large ribosomal subunit protein bL12 (122 aa).

The protein belongs to the bacterial ribosomal protein bL12 family. As to quaternary structure, homodimer. Part of the ribosomal stalk of the 50S ribosomal subunit. Forms a multimeric L10(L12)X complex, where L10 forms an elongated spine to which 2 to 4 L12 dimers bind in a sequential fashion. Binds GTP-bound translation factors.

Forms part of the ribosomal stalk which helps the ribosome interact with GTP-bound translation factors. Is thus essential for accurate translation. This Staphylococcus aureus (strain Newman) protein is Large ribosomal subunit protein bL12.